We begin with the raw amino-acid sequence, 549 residues long: Oxygen-dependent choline dehydrogenase (549 aa).

4–33 (DFVIIGSGSAGSALAYRLSEGGKNSVIVIE) provides a ligand contact to FAD. Histidine 465 acts as the Proton acceptor in catalysis.

Belongs to the GMC oxidoreductase family. The cofactor is FAD.

The enzyme catalyses choline + A = betaine aldehyde + AH2. It carries out the reaction betaine aldehyde + NAD(+) + H2O = glycine betaine + NADH + 2 H(+). It functions in the pathway amine and polyamine biosynthesis; betaine biosynthesis via choline pathway; betaine aldehyde from choline (cytochrome c reductase route): step 1/1. Its function is as follows. Involved in the biosynthesis of the osmoprotectant glycine betaine. Catalyzes the oxidation of choline to betaine aldehyde and betaine aldehyde to glycine betaine at the same rate. This chain is Oxygen-dependent choline dehydrogenase, found in Rhizobium johnstonii (strain DSM 114642 / LMG 32736 / 3841) (Rhizobium leguminosarum bv. viciae).